A 75-amino-acid chain; its full sequence is UPF0291 protein LMOf2365_1322 (75 aa).

Residues 56-75 (DPNGTDVTPHKVKQLRKNKH) are disordered. Residues 65-75 (HKVKQLRKNKH) are compositionally biased toward basic residues.

This sequence belongs to the UPF0291 family.

The protein localises to the cytoplasm. This is UPF0291 protein LMOf2365_1322 from Listeria monocytogenes serotype 4b (strain F2365).